The chain runs to 434 residues: 26S proteasome regulatory subunit 6A (434 aa).

An N-acetylalanine modification is found at Ala-2. Residue Tyr-180 is modified to Phosphotyrosine. 222 to 229 (GPPGTGKT) serves as a coordination point for ATP.

It belongs to the AAA ATPase family. Post-translationally, N-acetylated by NAT1.

It is found in the cytoplasm. Its subcellular location is the nucleus. Its function is as follows. The 26S proteasome is involved in the ATP-dependent degradation of ubiquitinated proteins. The regulatory (or ATPase) complex confers ATP dependency and substrate specificity to the 26S complex. The polypeptide is 26S proteasome regulatory subunit 6A (RPT5) (Saccharomyces cerevisiae (strain ATCC 204508 / S288c) (Baker's yeast)).